The primary structure comprises 1118 residues: Ubiquitin carboxyl-terminal hydrolase 8 (1118 aa).

One can recognise an MIT domain in the interval 33 to 116 (TKSYVHSALK…ESLKLRYEEA (84 aa)). Basic and acidic residues-rich tracts occupy residues 120-146 (KKLE…REDG) and 158-177 (LDSK…KCET). Residues 120–177 (KKLEEKDRQEEAQRLQQKRQETGREDGGTLAKGSLENVLDSKDKTQKSNGEKNEKCET) are disordered. Ser-160 carries the post-translational modification Phosphoserine. The 119-residue stretch at 195–313 (KNISLIIMDA…WLLCYPQYTT (119 aa)) folds into the Rhodanese domain. Phosphoserine is present on residues Ser-392 and Ser-400. A disordered region spans residues 402–447 (KNVPQIDRTKKPAVKLPEEHRIKSESTNHEQQSPQSGKVIPDRSTK). The SH3-binding motif lies at 405 to 413 (PQIDRTKKP). Positions 417 to 429 (LPEEHRIKSESTN) are enriched in basic and acidic residues. Ser-452 is modified (phosphoserine). A compositionally biased stretch (basic and acidic residues) spans 475–573 (KNKQEKELRE…AKKSVEDRGK (99 aa)). Disordered stretches follow at residues 475–648 (KNKQ…GRIV) and 679–746 (YPPE…ENKP). The residue at position 577 (Thr-577) is a Phosphothreonine. Basic and acidic residues predominate over residues 618 to 645 (TFREDTDDTERNKAQREPLTRARSEEMG). Over residues 716-726 (SYSSPDITQAI) the composition is skewed to polar residues. Phosphoserine occurs at positions 718 and 719. The 333-residue stretch at 777-1109 (TGLRNLGNTC…AAYILFYTSL (333 aa)) folds into the USP domain. Cys-786 (nucleophile) is an active-site residue. A Phosphothreonine modification is found at Thr-945. His-1067 (proton acceptor) is an active-site residue.

Belongs to the peptidase C19 family. Forms a ternary complex with RNF128 and OTUB1. Interacts (via C-terminal UCH catalytic domain) with OTUB1 isoform 1. Interacts with STAM2 (via SH3 domain). Interacts with DNAJB3, EGFR, EPS15, RASGRF1, RNF41, YWHAE, YWHAG and YWHAZ. Interacts with NBR1, RASGRF1, RNF41 and IST1. Associates with the ESCRT-0 complex and with microtubules. Interacts with BIRC6/bruce and KIF23/MKLP1. In terms of assembly, (Microbial infection) Interacts with Zika virus non-structural protein 1. In terms of processing, phosphorylation of Ser-718 is essential for interaction with YWHAE and for cytosol localization. Undergoes dephosphorylation at Ser-718 in the M phase. Tyrosine-phosphorylated in its N-terminal half in an EGFR-dependent manner. Ubiquitinated. Inactive form is mostly monoubiquitinated, but polyubiquitination happens too. Ubiquitination is increased in EGF-stimulated cells. Ubiquitination of active form is undetectable, suggesting a possibility that USP8 deubiquitinates itself, thereby regulating its own function.

It localises to the cytoplasm. It is found in the nucleus. The protein resides in the endosome membrane. Its subcellular location is the cell membrane. It carries out the reaction Thiol-dependent hydrolysis of ester, thioester, amide, peptide and isopeptide bonds formed by the C-terminal Gly of ubiquitin (a 76-residue protein attached to proteins as an intracellular targeting signal).. Its function is as follows. Hydrolase that can remove conjugated ubiquitin from proteins and therefore plays an important regulatory role at the level of protein turnover by preventing degradation. Converts both 'Lys-48' an 'Lys-63'-linked ubiquitin chains. Catalytic activity is enhanced in the M phase. Involved in cell proliferation. Required to enter into S phase in response to serum stimulation. May regulate T-cell anergy mediated by RNF128 via the formation of a complex containing RNF128 and OTUB1. Probably regulates the stability of STAM2 and RASGRF1. Regulates endosomal ubiquitin dynamics, cargo sorting, membrane traffic at early endosomes, and maintenance of ESCRT-0 stability. The level of protein ubiquitination on endosomes is essential for maintaining the morphology of the organelle. Deubiquitinates EPS15 and controls tyrosine kinase stability. Removes conjugated ubiquitin from EGFR thus regulating EGFR degradation and downstream MAPK signaling. Involved in acrosome biogenesis through interaction with the spermatid ESCRT-0 complex and microtubules. Deubiquitinates BIRC6/bruce and KIF23/MKLP1. Deubiquitinates BACE1 which inhibits BACE1 lysosomal degradation and modulates BACE-mediated APP cleavage and amyloid-beta formation. The polypeptide is Ubiquitin carboxyl-terminal hydrolase 8 (Homo sapiens (Human)).